Consider the following 361-residue polypeptide: Chorismate synthase (361 aa).

Arg48 and Arg54 together coordinate NADP(+). FMN is bound by residues 125–127 (RSS), 238–239 (NA), Gly278, 293–297 (KPTSS), and Arg319.

Belongs to the chorismate synthase family. In terms of assembly, homotetramer. It depends on FMNH2 as a cofactor.

It carries out the reaction 5-O-(1-carboxyvinyl)-3-phosphoshikimate = chorismate + phosphate. It participates in metabolic intermediate biosynthesis; chorismate biosynthesis; chorismate from D-erythrose 4-phosphate and phosphoenolpyruvate: step 7/7. Functionally, catalyzes the anti-1,4-elimination of the C-3 phosphate and the C-6 proR hydrogen from 5-enolpyruvylshikimate-3-phosphate (EPSP) to yield chorismate, which is the branch point compound that serves as the starting substrate for the three terminal pathways of aromatic amino acid biosynthesis. This reaction introduces a second double bond into the aromatic ring system. This chain is Chorismate synthase, found in Salmonella choleraesuis (strain SC-B67).